The chain runs to 298 residues: MVDEILKLKKEKGYIILAHNYQIPELQDIADFVGDSLQLARKAMELSEKKILFLGVDFMAELVKILNPDKKVIVPDRSATCPMANHLTPEIIREYREKFPDVPVVLYVNSTSECKALADVICTSANAVEVVKKLDSSVVIFGPDRNLGEYVAEKTGKKVITIPENGHCPVHQFNAESIDAVRKKYPDAKVIVHPESPKPVRDKADYVGSTGQMEKIPEKDPSRIFVIGTEIGMIHKLKKKFPDREFVPLEMAVCVNMKKNTLENTLHALQTESFEVILPKEVIEKAKKPILRMFELMG.

The iminosuccinate site is built by His19 and Ser36. Cys81 provides a ligand contact to [4Fe-4S] cluster. Residues 107-109 (YVN) and Ser124 each bind iminosuccinate. [4Fe-4S] cluster is bound at residue Cys168. Residues 193-195 (HPE) and Thr210 contribute to the iminosuccinate site. Cys254 is a binding site for [4Fe-4S] cluster.

This sequence belongs to the quinolinate synthase family. Type 2 subfamily. It depends on [4Fe-4S] cluster as a cofactor.

The protein resides in the cytoplasm. The enzyme catalyses iminosuccinate + dihydroxyacetone phosphate = quinolinate + phosphate + 2 H2O + H(+). It functions in the pathway cofactor biosynthesis; NAD(+) biosynthesis; quinolinate from iminoaspartate: step 1/1. Functionally, catalyzes the condensation of iminoaspartate with dihydroxyacetone phosphate to form quinolinate. In Thermotoga sp. (strain RQ2), this protein is Quinolinate synthase.